The chain runs to 581 residues: Arginine--tRNA ligase (581 aa).

The 'HIGH' region signature appears at 126-136 (PNLAKEMHVGH).

This sequence belongs to the class-I aminoacyl-tRNA synthetase family. As to quaternary structure, monomer.

The protein resides in the cytoplasm. It carries out the reaction tRNA(Arg) + L-arginine + ATP = L-arginyl-tRNA(Arg) + AMP + diphosphate. The protein is Arginine--tRNA ligase of Shewanella sediminis (strain HAW-EB3).